The following is a 112-amino-acid chain: Low molecular weight protein antigen 6 (112 aa).

The protein resides in the secreted. The protein is Low molecular weight protein antigen 6 (cfp6) of Mycobacterium bovis (strain ATCC BAA-935 / AF2122/97).